The following is a 276-amino-acid chain: Dermonecrotic toxin Ls4SicTox-alphaIII1i (276 aa).

H3 is an active-site residue. Mg(2+) is bound by residues E23 and D25. H38 serves as the catalytic Nucleophile. Residues C42 and C48 are joined by a disulfide bond. A Mg(2+)-binding site is contributed by D82.

This sequence belongs to the arthropod phospholipase D family. Class I subfamily. Mg(2+) serves as cofactor. As to expression, expressed by the venom gland.

It is found in the secreted. It carries out the reaction an N-(acyl)-sphingosylphosphocholine = an N-(acyl)-sphingosyl-1,3-cyclic phosphate + choline. The enzyme catalyses an N-(acyl)-sphingosylphosphoethanolamine = an N-(acyl)-sphingosyl-1,3-cyclic phosphate + ethanolamine. It catalyses the reaction a 1-acyl-sn-glycero-3-phosphocholine = a 1-acyl-sn-glycero-2,3-cyclic phosphate + choline. The catalysed reaction is a 1-acyl-sn-glycero-3-phosphoethanolamine = a 1-acyl-sn-glycero-2,3-cyclic phosphate + ethanolamine. Dermonecrotic toxins cleave the phosphodiester linkage between the phosphate and headgroup of certain phospholipids (sphingolipid and lysolipid substrates), forming an alcohol (often choline) and a cyclic phosphate. This toxin acts on sphingomyelin (SM). It may also act on ceramide phosphoethanolamine (CPE), lysophosphatidylcholine (LPC) and lysophosphatidylethanolamine (LPE), but not on lysophosphatidylserine (LPS), and lysophosphatidylglycerol (LPG). It acts by transphosphatidylation, releasing exclusively cyclic phosphate products as second products. Induces dermonecrosis, hemolysis, increased vascular permeability, edema, inflammatory response, and platelet aggregation. This is Dermonecrotic toxin Ls4SicTox-alphaIII1i from Loxosceles sp. (strain 4 GJB-2008) (Recluse spider).